The sequence spans 232 residues: Adenosylcobinamide-GDP ribazoletransferase (232 aa).

The next 7 helical transmembrane spans lie at 24–44 (LWAF…ILYL), 46–66 (IPLA…LLHL), 96–116 (IAGV…LSML), 117–137 (PFYA…LGLA), 153–173 (GMNG…YLPV), 174–194 (VIYD…WYVI), and 210–230 (GAMA…SLCF).

Belongs to the CobS family. Mg(2+) serves as cofactor.

It localises to the cell membrane. It catalyses the reaction alpha-ribazole + adenosylcob(III)inamide-GDP = adenosylcob(III)alamin + GMP + H(+). The enzyme catalyses alpha-ribazole 5'-phosphate + adenosylcob(III)inamide-GDP = adenosylcob(III)alamin 5'-phosphate + GMP + H(+). It functions in the pathway cofactor biosynthesis; adenosylcobalamin biosynthesis; adenosylcobalamin from cob(II)yrinate a,c-diamide: step 7/7. Joins adenosylcobinamide-GDP and alpha-ribazole to generate adenosylcobalamin (Ado-cobalamin). Also synthesizes adenosylcobalamin 5'-phosphate from adenosylcobinamide-GDP and alpha-ribazole 5'-phosphate. The protein is Adenosylcobinamide-GDP ribazoletransferase of Pyrococcus abyssi (strain GE5 / Orsay).